A 204-amino-acid chain; its full sequence is Glycerol-3-phosphate acyltransferase (204 aa).

A run of 5 helical transmembrane segments spans residues 8 to 28, 53 to 73, 81 to 101, 116 to 136, and 155 to 175; these read ILIF…CYIF, VPAA…VVIA, FITA…IFFG, FGFS…VAII, and VIFT…IIIL.

It belongs to the PlsY family. In terms of assembly, probably interacts with PlsX.

The protein resides in the cell inner membrane. The catalysed reaction is an acyl phosphate + sn-glycerol 3-phosphate = a 1-acyl-sn-glycero-3-phosphate + phosphate. The protein operates within lipid metabolism; phospholipid metabolism. Its function is as follows. Catalyzes the transfer of an acyl group from acyl-phosphate (acyl-PO(4)) to glycerol-3-phosphate (G3P) to form lysophosphatidic acid (LPA). This enzyme utilizes acyl-phosphate as fatty acyl donor, but not acyl-CoA or acyl-ACP. The chain is Glycerol-3-phosphate acyltransferase from Francisella tularensis subsp. holarctica (strain FTNF002-00 / FTA).